A 229-amino-acid polypeptide reads, in one-letter code: Transmembrane protein 217 (229 aa).

The chain crosses the membrane as a helical span at residues 13 to 33 (MGTVLSGVFTIMAVDMYLIFE). A glycan (N-linked (GlcNAc...) asparagine) is linked at Asn39. 3 helical membrane-spanning segments follow: residues 67–87 (IVLFLSFITILISCFLLYSVY), 94–114 (LVIYIVWIFFYETANVVIQIL), and 129–149 (WFGLVSRTVMHCFWMFFVINY). A glycan (N-linked (GlcNAc...) asparagine) is linked at Asn156.

It is found in the membrane. In Homo sapiens (Human), this protein is Transmembrane protein 217 (TMEM217).